Reading from the N-terminus, the 219-residue chain is Small ribosomal subunit protein uS3 (219 aa).

The region spanning Ile-38–Lys-106 is the KH type-2 domain.

The protein belongs to the universal ribosomal protein uS3 family. In terms of assembly, part of the 30S ribosomal subunit. Forms a tight complex with proteins S10 and S14.

Functionally, binds the lower part of the 30S subunit head. Binds mRNA in the 70S ribosome, positioning it for translation. The chain is Small ribosomal subunit protein uS3 from Latilactobacillus sakei subsp. sakei (strain 23K) (Lactobacillus sakei subsp. sakei).